A 307-amino-acid polypeptide reads, in one-letter code: Ribosomal protein L11 methyltransferase (307 aa).

The S-adenosyl-L-methionine site is built by T144, G165, D187, and N235.

Belongs to the methyltransferase superfamily. PrmA family.

The protein localises to the cytoplasm. The catalysed reaction is L-lysyl-[protein] + 3 S-adenosyl-L-methionine = N(6),N(6),N(6)-trimethyl-L-lysyl-[protein] + 3 S-adenosyl-L-homocysteine + 3 H(+). In terms of biological role, methylates ribosomal protein L11. This is Ribosomal protein L11 methyltransferase from Psychrobacter sp. (strain PRwf-1).